Reading from the N-terminus, the 126-residue chain is Nucleoside diphosphate kinase B (126 aa).

5 residues coordinate ATP: K6, F37, T68, R79, and N89. The active-site Pros-phosphohistidine intermediate is H92.

The protein belongs to the NDK family. Requires Mg(2+) as cofactor.

The protein localises to the cytoplasm. It localises to the nucleus. It is found in the cell projection. Its subcellular location is the lamellipodium. The protein resides in the ruffle. It carries out the reaction a 2'-deoxyribonucleoside 5'-diphosphate + ATP = a 2'-deoxyribonucleoside 5'-triphosphate + ADP. The enzyme catalyses a ribonucleoside 5'-diphosphate + ATP = a ribonucleoside 5'-triphosphate + ADP. Major role in the synthesis of nucleoside triphosphates other than ATP. The protein is Nucleoside diphosphate kinase B (nme2) of Merluccius capensis (Shallow-water Cape hake).